The following is a 506-amino-acid chain: Anaerobic nitric oxide reductase transcription regulator NorR (506 aa).

Asp57 carries the 4-aspartylphosphate modification. The 230-residue stretch at 187–416 folds into the Sigma-54 factor interaction domain; that stretch reads MIGLSPAMTQ…LEHAIHRAVV (230 aa). ATP contacts are provided by residues 215–222 and 278–287; these read GETGTGKE and ADNGTLFLDE. The H-T-H motif DNA-binding region spans 481–500; that stretch reads WAASARALETDVANLHRLAK.

It participates in nitrogen metabolism; nitric oxide reduction. Its function is as follows. Required for the expression of anaerobic nitric oxide (NO) reductase, acts as a transcriptional activator for at least the norVW operon. Activation also requires sigma-54. This is Anaerobic nitric oxide reductase transcription regulator NorR from Salmonella agona (strain SL483).